We begin with the raw amino-acid sequence, 218 residues long: Large ribosomal subunit protein uL3 (218 aa).

The protein belongs to the universal ribosomal protein uL3 family. As to quaternary structure, part of the 50S ribosomal subunit. Forms a cluster with proteins L14 and L19.

One of the primary rRNA binding proteins, it binds directly near the 3'-end of the 23S rRNA, where it nucleates assembly of the 50S subunit. The protein is Large ribosomal subunit protein uL3 of Brachyspira pilosicoli (Serpulina pilosicoli).